The chain runs to 217 residues: Small ribosomal subunit protein uS3 (217 aa).

A KH type-2 domain is found at 40–110; the sequence is IRDLINKWFN…EVYINIHEVR (71 aa).

Belongs to the universal ribosomal protein uS3 family. Part of the 30S ribosomal subunit. Forms a tight complex with proteins S10 and S14.

In terms of biological role, binds the lower part of the 30S subunit head. Binds mRNA in the 70S ribosome, positioning it for translation. The protein is Small ribosomal subunit protein uS3 of Rickettsia prowazekii (strain Madrid E).